Consider the following 222-residue polypeptide: 3-demethoxyubiquinol 3-hydroxylase (222 aa).

Positions 71, 101, 104, 153, 185, and 188 each coordinate Fe cation.

It belongs to the COQ7 family. Fe cation is required as a cofactor.

It is found in the cell membrane. It carries out the reaction a 5-methoxy-2-methyl-3-(all-trans-polyprenyl)benzene-1,4-diol + AH2 + O2 = a 3-demethylubiquinol + A + H2O. It functions in the pathway cofactor biosynthesis; ubiquinone biosynthesis. In terms of biological role, catalyzes the hydroxylation of 2-nonaprenyl-3-methyl-6-methoxy-1,4-benzoquinol during ubiquinone biosynthesis. The polypeptide is 3-demethoxyubiquinol 3-hydroxylase (Bordetella bronchiseptica (strain ATCC BAA-588 / NCTC 13252 / RB50) (Alcaligenes bronchisepticus)).